A 34-amino-acid chain; its full sequence is Photosystem II reaction center protein M (34 aa).

Residues 5–25 form a helical membrane-spanning segment; it reads ILAFIATALFILIPTSFLLII.

This sequence belongs to the PsbM family. PSII is composed of 1 copy each of membrane proteins PsbA, PsbB, PsbC, PsbD, PsbE, PsbF, PsbH, PsbI, PsbJ, PsbK, PsbL, PsbM, PsbT, PsbX, PsbY, PsbZ, Psb30/Ycf12, at least 3 peripheral proteins of the oxygen-evolving complex and a large number of cofactors. It forms dimeric complexes. Detected in both etioplasts and green leaves; PSII is only assembled in green leaves.

The protein localises to the plastid. It is found in the chloroplast thylakoid membrane. Functionally, one of the components of the core complex of photosystem II (PSII). PSII is a light-driven water:plastoquinone oxidoreductase that uses light energy to abstract electrons from H(2)O, generating O(2) and a proton gradient subsequently used for ATP formation. It consists of a core antenna complex that captures photons, and an electron transfer chain that converts photonic excitation into a charge separation. This subunit is found at the monomer-monomer interface. The chain is Photosystem II reaction center protein M from Hordeum vulgare (Barley).